The sequence spans 1206 residues: Cilia- and flagella-associated protein 157 (1206 aa).

Disordered stretches follow at residues 26 to 52 (GGGGGSAAAAAMQEEQGEQEGPTGRDL), 79 to 109 (RAEQEHPQEGRPQQQEQGGEARQEQQGQQAP), 125 to 173 (EATC…RGPL), and 327 to 405 (GSGK…EEDW). Composition is skewed to low complexity over residues 88-109 (GRPQQQEQGGEARQEQQGQQAP), 156-173 (AKAVARGPRGAGTARGPL), and 385-397 (QQLGEQPGEQPGG). Coiled coils occupy residues 634–732 (TDEL…KTKD), 799–833 (TEKLLNKNNKLMEENAELRRQLELSKQTEEELARR), and 876–903 (LHLAQLQLEEKSAEADALRERLESKTAE). Disordered regions lie at residues 936–990 (TTTN…DELS), 1011–1072 (LSHG…GATS), and 1168–1206 (PWGKRSEQQPLTTTKHSGTFLRKGNGPSNNTGSRGSLKV). Low complexity-rich tracts occupy residues 951-973 (AGADAAGGSRSGSPTPPGASSSA) and 1014-1035 (GPLSQSSPAPLSAGGMGSALAG). 2 stretches are compositionally biased toward gly residues: residues 1037–1046 (WGPGSPGGSR) and 1058–1067 (SAGGMGGPQG). 2 stretches are compositionally biased toward polar residues: residues 1175–1184 (QQPLTTTKHS) and 1193–1206 (GPSNNTGSRGSLKV).

It belongs to the CFAP157 family.

The protein localises to the cell projection. Its subcellular location is the cilium. It is found in the flagellum. The protein is Cilia- and flagella-associated protein 157 of Chlamydomonas reinhardtii (Chlamydomonas smithii).